The sequence spans 339 residues: UDP-N-acetylglucosamine/UDP-N-acetylgalactosamine transporter nstp-4 (339 aa).

The next 8 membrane-spanning stretches (helical) occupy residues 44–64 (LSST…FFVI), 94–114 (LKVA…FFAL), 148–168 (YNWM…YPSG), 186–206 (ILGL…GVYF), 224–244 (LAFF…WQAI), 255–275 (GVIW…ALVV), 281–301 (ILKG…SWLV), and 305–325 (LTIT…TFLY).

The protein belongs to the nucleotide-sugar transporter family. SLC35A subfamily. Widely expressed, including in pharynx and pharyngeal gland cells, seam cells, spermatheca, stomatointestinal muscle, vulva, and body wall muscle.

It is found in the golgi apparatus membrane. Functionally, uridine diphosphate-N-acetylglucosamine (UDP-GlcNAc) transporter in the Golgi apparatus. UDP-N-acetylgalactosamine (UDP-GalNAc) transporter in the Golgi apparatus. Apparently transports UDP-GlcNAc and UDP-GalNAc simultaneously, and independently, by an unknown mechanism. Functions redundantly with nucleotide sugar transporter srf-3. May be involved in gonadal development. The protein is UDP-N-acetylglucosamine/UDP-N-acetylgalactosamine transporter nstp-4 of Caenorhabditis elegans.